The sequence spans 309 residues: MTKKVGLLVMAYGTPYKDEDIERYYTDIRHGHKPSEEMIADLRGRYHAIGGLSPLAKITEAQAYGLEKALNDAQDEVEFKAYIGLKHIEPFIEDAVEAMHKDGIEEAISIVLAPHYSSFSVEAYNKRAKDAADKLGGIHIQAINDWYKQPKFIQMWADRINETAKQIPAEELIDTVLIVSAHSLPEKIKQHNDPYPDQLQETADLIFDKVAVPHYALGWQSEGKTGEPWLGPDVQDLTRELYGREKYKHFIYTPVGFVAEHLEVLYDNDYECKVVTDEVGAAYHRPPMPNADPEFLEVLRTVVWDAYTK.

Fe-coproporphyrin III contacts are provided by residues tyrosine 12, arginine 29, arginine 45 to tyrosine 46, serine 53, and tyrosine 124. Fe(2+) is bound by residues histidine 182 and glutamate 263.

Belongs to the ferrochelatase family.

The protein localises to the cytoplasm. The enzyme catalyses Fe-coproporphyrin III + 2 H(+) = coproporphyrin III + Fe(2+). Its pathway is porphyrin-containing compound metabolism; protoheme biosynthesis. Functionally, involved in coproporphyrin-dependent heme b biosynthesis. Catalyzes the insertion of ferrous iron into coproporphyrin III to form Fe-coproporphyrin III. In Listeria innocua serovar 6a (strain ATCC BAA-680 / CLIP 11262), this protein is Coproporphyrin III ferrochelatase.